Here is a 314-residue protein sequence, read N- to C-terminus: ATP synthase gamma chain (314 aa).

It belongs to the ATPase gamma chain family. F-type ATPases have 2 components, CF(1) - the catalytic core - and CF(0) - the membrane proton channel. CF(1) has five subunits: alpha(3), beta(3), gamma(1), delta(1), epsilon(1). CF(0) has three main subunits: a, b and c.

The protein resides in the cellular thylakoid membrane. In terms of biological role, produces ATP from ADP in the presence of a proton gradient across the membrane. The gamma chain is believed to be important in regulating ATPase activity and the flow of protons through the CF(0) complex. The protein is ATP synthase gamma chain of Synechococcus sp. (strain JA-3-3Ab) (Cyanobacteria bacterium Yellowstone A-Prime).